The chain runs to 574 residues: Lengsin (574 aa).

Disordered stretches follow at residues 1 to 36 (MNDE…KVTK) and 66 to 131 (GNMS…IPTT). Residues 11 to 23 (NTRDEGNETEASR) are compositionally biased toward basic and acidic residues. The span at 25–36 (SKLRRTRKKVTK) shows a compositional bias: basic residues. Residues 91–131 (NQTTVIKPSPLKTSASAPCSEFNTNSNHADNTWEDTQIPTT) are compositionally biased toward polar residues. A GS beta-grasp domain is found at 148-242 (NHLQFVRFEA…VICDTFTVTG (95 aa)). Residues 249–574 (PRYIAKRQLS…ERNKFLEYFI (326 aa)) form the GS catalytic domain.

The protein belongs to the glutamine synthetase family. As to quaternary structure, dodecamer. Interacts with BFSP2 and VIM.

Functionally, may act as a component of the cytoskeleton or as a chaperone for the reorganization of intermediate filament proteins during terminal differentiation in the lens. Does not seem to have enzymatic activity. This Canis lupus familiaris (Dog) protein is Lengsin (LGSN).